Reading from the N-terminus, the 156-residue chain is 2-C-methyl-D-erythritol 2,4-cyclodiphosphate synthase (156 aa).

2 residues coordinate a divalent metal cation: Asp9 and His11. 4-CDP-2-C-methyl-D-erythritol 2-phosphate is bound by residues 9 to 11 and 35 to 36; these read DAH and HS. Position 43 (His43) interacts with a divalent metal cation. 57–59 is a 4-CDP-2-C-methyl-D-erythritol 2-phosphate binding site; sequence DIG.

This sequence belongs to the IspF family. In terms of assembly, homotrimer. Requires a divalent metal cation as cofactor.

The enzyme catalyses 4-CDP-2-C-methyl-D-erythritol 2-phosphate = 2-C-methyl-D-erythritol 2,4-cyclic diphosphate + CMP. Its pathway is isoprenoid biosynthesis; isopentenyl diphosphate biosynthesis via DXP pathway; isopentenyl diphosphate from 1-deoxy-D-xylulose 5-phosphate: step 4/6. In terms of biological role, involved in the biosynthesis of isopentenyl diphosphate (IPP) and dimethylallyl diphosphate (DMAPP), two major building blocks of isoprenoid compounds. Catalyzes the conversion of 4-diphosphocytidyl-2-C-methyl-D-erythritol 2-phosphate (CDP-ME2P) to 2-C-methyl-D-erythritol 2,4-cyclodiphosphate (ME-CPP) with a corresponding release of cytidine 5-monophosphate (CMP). The polypeptide is 2-C-methyl-D-erythritol 2,4-cyclodiphosphate synthase (Hydrogenobaculum sp. (strain Y04AAS1)).